The chain runs to 517 residues: ATP synthase subunit alpha (517 aa).

175–182 (GDRQTGKT) serves as a coordination point for ATP.

This sequence belongs to the ATPase alpha/beta chains family. F-type ATPases have 2 components, CF(1) - the catalytic core - and CF(0) - the membrane proton channel. CF(1) has five subunits: alpha(3), beta(3), gamma(1), delta(1), epsilon(1). CF(0) has three main subunits: a(1), b(2) and c(9-12). The alpha and beta chains form an alternating ring which encloses part of the gamma chain. CF(1) is attached to CF(0) by a central stalk formed by the gamma and epsilon chains, while a peripheral stalk is formed by the delta and b chains.

The protein resides in the cell membrane. It carries out the reaction ATP + H2O + 4 H(+)(in) = ADP + phosphate + 5 H(+)(out). In terms of biological role, produces ATP from ADP in the presence of a proton gradient across the membrane. The alpha chain is a regulatory subunit. The chain is ATP synthase subunit alpha from Herpetosiphon aurantiacus (strain ATCC 23779 / DSM 785 / 114-95).